The sequence spans 120 residues: NAD(P)H-quinone oxidoreductase subunit 3, chloroplastic (120 aa).

A run of 3 helical transmembrane segments spans residues 9 to 29 (IFWA…WISA), 64 to 84 (MFAL…PWAM), and 88 to 108 (VLGI…VVGL).

The protein belongs to the complex I subunit 3 family. As to quaternary structure, NDH is composed of at least 16 different subunits, 5 of which are encoded in the nucleus.

Its subcellular location is the plastid. The protein localises to the chloroplast thylakoid membrane. It carries out the reaction a plastoquinone + NADH + (n+1) H(+)(in) = a plastoquinol + NAD(+) + n H(+)(out). The enzyme catalyses a plastoquinone + NADPH + (n+1) H(+)(in) = a plastoquinol + NADP(+) + n H(+)(out). Its function is as follows. NDH shuttles electrons from NAD(P)H:plastoquinone, via FMN and iron-sulfur (Fe-S) centers, to quinones in the photosynthetic chain and possibly in a chloroplast respiratory chain. The immediate electron acceptor for the enzyme in this species is believed to be plastoquinone. Couples the redox reaction to proton translocation, and thus conserves the redox energy in a proton gradient. The chain is NAD(P)H-quinone oxidoreductase subunit 3, chloroplastic from Oryza nivara (Indian wild rice).